A 356-amino-acid polypeptide reads, in one-letter code: Leucoanthocyanidin dioxygenase (356 aa).

Residues tyrosine 142 and lysine 213 each contribute to the substrate site. The Fe2OG dioxygenase domain maps to 208 to 307; that stretch reads LLLQMKINYY…RISWAVFCEP (100 aa). 215–217 is a binding site for 2-oxoglutarate; sequence NYY. Histidine 232 serves as a coordination point for Fe cation. Threonine 233 provides a ligand contact to substrate. Residues aspartate 234 and histidine 288 each coordinate Fe cation. 298–300 contributes to the 2-oxoglutarate binding site; that stretch reads RIS. Substrate-binding residues include glutamate 306 and lysine 341.

This sequence belongs to the iron/ascorbate-dependent oxidoreductase family. The cofactor is L-ascorbate. Fe(2+) serves as cofactor. Expressed in young seedlings (at protein level).

It catalyses the reaction a (2R,3S,4S)-leucoanthocyanidin + 2-oxoglutarate + O2 = a 4-H-anthocyanidin with a 3-hydroxy group + succinate + CO2 + 2 H2O. It carries out the reaction (2R,3S,4S)-3,4-leucopelargonidin + 2-oxoglutarate + O2 = (4S)-2,3-dehydroleucopelargonidin + succinate + CO2 + H2O + H(+). The catalysed reaction is (2R,3S,4S)-leucocyanidin + 2-oxoglutarate + O2 = (4S)-2,3-dehydroleucocyanidin + succinate + CO2 + H2O + H(+). The protein operates within pigment biosynthesis; anthocyanin biosynthesis. In terms of biological role, involved in anthocyanin and protoanthocyanidin biosynthesis by catalyzing the oxidation of leucoanthocyanidins into anthocyanidins. Possesses low flavonol synthase activity in vitro towards dihydrokaempferol and dihydroquercetin producing kaempferol and quercitin, respectively. The polypeptide is Leucoanthocyanidin dioxygenase (LDOX) (Arabidopsis thaliana (Mouse-ear cress)).